Consider the following 293-residue polypeptide: 4-hydroxy-tetrahydrodipicolinate synthase (293 aa).

Thr-44 contacts pyruvate. The Proton donor/acceptor role is filled by Tyr-132. The active-site Schiff-base intermediate with substrate is Lys-160. Ile-204 contributes to the pyruvate binding site.

It belongs to the DapA family. As to quaternary structure, homotetramer; dimer of dimers.

Its subcellular location is the cytoplasm. It carries out the reaction L-aspartate 4-semialdehyde + pyruvate = (2S,4S)-4-hydroxy-2,3,4,5-tetrahydrodipicolinate + H2O + H(+). It functions in the pathway amino-acid biosynthesis; L-lysine biosynthesis via DAP pathway; (S)-tetrahydrodipicolinate from L-aspartate: step 3/4. Functionally, catalyzes the condensation of (S)-aspartate-beta-semialdehyde [(S)-ASA] and pyruvate to 4-hydroxy-tetrahydrodipicolinate (HTPA). The chain is 4-hydroxy-tetrahydrodipicolinate synthase from Hyphomonas neptunium (strain ATCC 15444).